The primary structure comprises 458 residues: L-hydantoinase (458 aa).

Residues His-60, His-62, Lys-147, His-183, His-239, and Asp-312 each coordinate Zn(2+). The residue at position 147 (Lys-147) is an N6-carboxylysine.

In terms of assembly, homotetramer. Zn(2+) serves as cofactor. In terms of processing, carboxylation allows a single lysine to coordinate two zinc ions.

In terms of biological role, rather more predominant for the cleavage of aryl- than for alkyl-hydantoin derivatives. The stereoselectivity of this enzyme depends on the substrate used for bioconversion: strictly L-selective for the cleavage of D,L-5-indolylmethylhydantoin, but D-selective for the hydrolysis of D,L-methylthioethylhydantoin. The protein is L-hydantoinase (lhyD) of Paenarthrobacter aurescens (Arthrobacter aurescens).